Here is a 264-residue protein sequence, read N- to C-terminus: ATP synthase subunit a (264 aa).

6 helical membrane passes run 27–47, 87–107, 131–151, 172–192, 196–216, and 230–250; these read VHLD…FVFS, VGPL…IDLI, DISG…FYTI, LLIP…PVSL, LFGN…MYMA, and LAWA…FMML.

This sequence belongs to the ATPase A chain family. In terms of assembly, F-type ATPases have 2 components, CF(1) - the catalytic core - and CF(0) - the membrane proton channel. CF(1) has five subunits: alpha(3), beta(3), gamma(1), delta(1), epsilon(1). CF(0) has three main subunits: a(1), b(2) and c(9-12). The alpha and beta chains form an alternating ring which encloses part of the gamma chain. CF(1) is attached to CF(0) by a central stalk formed by the gamma and epsilon chains, while a peripheral stalk is formed by the delta and b chains.

It localises to the cell inner membrane. Key component of the proton channel; it plays a direct role in the translocation of protons across the membrane. This chain is ATP synthase subunit a, found in Pasteurella multocida (strain Pm70).